The chain runs to 309 residues: Formimidoylglutamase (309 aa).

Positions 120, 145, 147, 149, 236, and 238 each coordinate Mn(2+).

Belongs to the arginase family. Mn(2+) is required as a cofactor.

It catalyses the reaction N-formimidoyl-L-glutamate + H2O = formamide + L-glutamate. Its pathway is amino-acid degradation; L-histidine degradation into L-glutamate; L-glutamate from N-formimidoyl-L-glutamate (hydrolase route): step 1/1. Its function is as follows. Catalyzes the conversion of N-formimidoyl-L-glutamate to L-glutamate and formamide. The sequence is that of Formimidoylglutamase from Chromobacterium violaceum (strain ATCC 12472 / DSM 30191 / JCM 1249 / CCUG 213 / NBRC 12614 / NCIMB 9131 / NCTC 9757 / MK).